The chain runs to 309 residues: Ribonuclease Z (309 aa).

Zn(2+)-binding residues include H63, H65, D67, H68, H145, D216, and H274. D67 (proton acceptor) is an active-site residue.

The protein belongs to the RNase Z family. In terms of assembly, homodimer. It depends on Zn(2+) as a cofactor.

It catalyses the reaction Endonucleolytic cleavage of RNA, removing extra 3' nucleotides from tRNA precursor, generating 3' termini of tRNAs. A 3'-hydroxy group is left at the tRNA terminus and a 5'-phosphoryl group is left at the trailer molecule.. Zinc phosphodiesterase, which displays some tRNA 3'-processing endonuclease activity. Probably involved in tRNA maturation, by removing a 3'-trailer from precursor tRNA. This Streptococcus uberis (strain ATCC BAA-854 / 0140J) protein is Ribonuclease Z.